Reading from the N-terminus, the 552-residue chain is Cycloheximide resistance protein (552 aa).

Positions 46–70 are disordered; the sequence is VLNSSDKSQSSENKEQTEGDQATIQ. Polar residues predominate over residues 47 to 56; it reads LNSSDKSQSS. The next 12 membrane-spanning stretches (helical) occupy residues 100–120, 137–157, 168–188, 194–213, 225–246, 262–282, 346–362, 381–399, 419–439, 445–464, 477–494, and 518–539; these read AIAA…SAIY, LATL…LFWS, TPLY…TALS, LSVL…STGG, YSIA…GPLI, WSFW…SFSL, IYIA…FESV, YVST…LPTV, LPPA…FGWT, NWFV…FIIF, VEYL…RSVS, and WGSS…FFYL.

The protein belongs to the major facilitator superfamily. CAR1 family.

It localises to the membrane. Functionally, probable transporter. Confers resistance to cycloheximide. In Candida maltosa (Yeast), this protein is Cycloheximide resistance protein (CYHR).